Here is a 447-residue protein sequence, read N- to C-terminus: Probable aspartic protease At2g35615 (447 aa).

An N-terminal signal peptide occupies residues 1–20 (MATQILLCFFLFFSVTLSSS). N-linked (GlcNAc...) asparagine glycosylation occurs at Asn25. Positions 85–439 (FFMSITIGTP…DLETRTVSFQ (355 aa)) constitute a Peptidase A1 domain. The active site involves Asp103. The N-linked (GlcNAc...) asparagine glycan is linked to Asn251. The active site involves Asp326.

Belongs to the peptidase A1 family.

The protein resides in the secreted. This chain is Probable aspartic protease At2g35615, found in Arabidopsis thaliana (Mouse-ear cress).